The primary structure comprises 967 residues: Phosphoenolpyruvate carboxylase (967 aa).

Serine 10 bears the Phosphoserine mark. Residues histidine 171 and lysine 601 contribute to the active site. The segment at 915–936 (NASRLPLSRESPEATKPADELV) is disordered. The segment covering 924–933 (ESPEATKPAD) has biased composition (basic and acidic residues).

It belongs to the PEPCase type 1 family. As to quaternary structure, homotetramer. The cofactor is Mg(2+).

It localises to the cytoplasm. It carries out the reaction oxaloacetate + phosphate = phosphoenolpyruvate + hydrogencarbonate. By light-reversible phosphorylation. Functionally, through the carboxylation of phosphoenolpyruvate (PEP) it forms oxaloacetate, a four-carbon dicarboxylic acid source for the tricarboxylic acid cycle. The protein is Phosphoenolpyruvate carboxylase of Pisum sativum (Garden pea).